A 64-amino-acid chain; its full sequence is UPF0370 protein YE1145 (64 aa).

Residues 3 to 23 (WLADYWWVVLIILVGMILNGI) traverse the membrane as a helical segment. Positions 36–64 (SNKPEIPPHRDNNAQWDDDDDWPDKDKKK) are disordered.

It belongs to the UPF0370 family.

The protein localises to the cell membrane. In Yersinia enterocolitica serotype O:8 / biotype 1B (strain NCTC 13174 / 8081), this protein is UPF0370 protein YE1145.